Reading from the N-terminus, the 193-residue chain is dCTP deaminase (193 aa).

DCTP-binding positions include 110–115 (RSSLAR), D128, 136–138 (VLE), Y171, K178, and Q182. Residue E138 is the Proton donor/acceptor of the active site. The tract at residues 169–193 (RPYNRREDAKYRNQQGAVASRIDKD) is disordered.

The protein belongs to the dCTP deaminase family. Homotrimer.

The enzyme catalyses dCTP + H2O + H(+) = dUTP + NH4(+). It functions in the pathway pyrimidine metabolism; dUMP biosynthesis; dUMP from dCTP (dUTP route): step 1/2. In terms of biological role, catalyzes the deamination of dCTP to dUTP. The sequence is that of dCTP deaminase from Escherichia coli O1:K1 / APEC.